Consider the following 166-residue polypeptide: Regulatory protein RecX (166 aa).

It belongs to the RecX family.

The protein resides in the cytoplasm. Modulates RecA activity. The polypeptide is Regulatory protein RecX (Escherichia coli (strain SE11)).